The sequence spans 222 residues: Probable septum site-determining protein MinC (222 aa).

Belongs to the MinC family. Interacts with MinD and FtsZ.

Functionally, cell division inhibitor that blocks the formation of polar Z ring septums. Rapidly oscillates between the poles of the cell to destabilize FtsZ filaments that have formed before they mature into polar Z rings. Prevents FtsZ polymerization. The polypeptide is Probable septum site-determining protein MinC (Lysinibacillus sphaericus (strain C3-41)).